A 157-amino-acid chain; its full sequence is Endoribonuclease YbeY (157 aa).

Residues H114, H118, and H124 each contribute to the Zn(2+) site.

Belongs to the endoribonuclease YbeY family. Requires Zn(2+) as cofactor.

Its subcellular location is the cytoplasm. In terms of biological role, single strand-specific metallo-endoribonuclease involved in late-stage 70S ribosome quality control and in maturation of the 3' terminus of the 16S rRNA. The chain is Endoribonuclease YbeY from Edwardsiella ictaluri (strain 93-146).